Reading from the N-terminus, the 370-residue chain is Ni-sirohydrochlorin a,c-diamide reductive cyclase complex, component CfbD (370 aa).

This sequence belongs to the NifD/NifK/NifE/NifN family. As to quaternary structure, homodimer or monomer. The Ni-sirohydrochlorin a,c-diamide reductive cyclase complex is composed of a NifH homolog component CfbC and a NifD homolog component CfbD. It depends on [4Fe-4S] cluster as a cofactor.

The enzyme catalyses Ni-sirohydrochlorin a,c-diamide + 3 AH2 + ATP + H2O = 15,17(3)-seco-F430-17(3)-acid + 3 A + ADP + phosphate. In terms of biological role, involved in the biosynthesis of the unique nickel-containing tetrapyrrole coenzyme F430, the prosthetic group of methyl-coenzyme M reductase (MCR), which plays a key role in methanogenesis and anaerobic methane oxidation. Catalyzes both the six-electron reduction of the tetrahydroporphyrin ring system and the gamma-lactamization of the c-acetamide side chain of Ni-sirohydrochlorin a,c-diamide to yield 15,17(3)-seco-F430-17(3)-acid (seco-F430), the last intermediate in the biosynthesis of the coenzyme F430. The chain is Ni-sirohydrochlorin a,c-diamide reductive cyclase complex, component CfbD from Methanosarcina acetivorans (strain ATCC 35395 / DSM 2834 / JCM 12185 / C2A).